Here is a 97-residue protein sequence, read N- to C-terminus: Bacterial microcompartment shell protein EutM (97 aa).

One can recognise a BMC domain in the interval 3–87 (ALGMIETRGL…PHGDLEEVFP (85 aa)).

It belongs to the bacterial microcompartments protein family. Homohexamer with a central pore of up to 8.6 Angstroms diameter. The hexamers pack into a two-dimensional array. Interacts with EutQ.

The protein resides in the bacterial microcompartment. Its pathway is amine and polyamine degradation; ethanolamine degradation. In terms of biological role, probably a major component of the bacterial microcompartment (BMC) shell dedicated to ethanolamine degradation. Each homohexamer has a central pore with an opening of up to 8.6 Angstroms. A positively-charged funnel leads to the pore from each side of the hexamer. The pore probably allows metabolite passage into and out of the BMC. In Escherichia coli O6:H1 (strain CFT073 / ATCC 700928 / UPEC), this protein is Bacterial microcompartment shell protein EutM (eutM).